Reading from the N-terminus, the 292-residue chain is Acetylglutamate kinase (292 aa).

Substrate is bound by residues 60 to 61 (GG), Arg82, and Asn187.

Belongs to the acetylglutamate kinase family. ArgB subfamily.

It localises to the cytoplasm. The enzyme catalyses N-acetyl-L-glutamate + ATP = N-acetyl-L-glutamyl 5-phosphate + ADP. It functions in the pathway amino-acid biosynthesis; L-arginine biosynthesis; N(2)-acetyl-L-ornithine from L-glutamate: step 2/4. Catalyzes the ATP-dependent phosphorylation of N-acetyl-L-glutamate. The sequence is that of Acetylglutamate kinase from Methanobrevibacter smithii (strain ATCC 35061 / DSM 861 / OCM 144 / PS).